Consider the following 107-residue polypeptide: Protein TAP1 (107 aa).

The signal sequence occupies residues 1-23; sequence MESKRVDVLVGLMLIMAIFGVHS.

As to expression, stamen.

The protein is Protein TAP1 (TAP1) of Antirrhinum majus (Garden snapdragon).